The chain runs to 305 residues: UDP-3-O-acyl-N-acetylglucosamine deacetylase (305 aa).

The Zn(2+) site is built by histidine 79, histidine 238, and aspartate 242. The active-site Proton donor is histidine 265.

Belongs to the LpxC family. It depends on Zn(2+) as a cofactor.

The catalysed reaction is a UDP-3-O-[(3R)-3-hydroxyacyl]-N-acetyl-alpha-D-glucosamine + H2O = a UDP-3-O-[(3R)-3-hydroxyacyl]-alpha-D-glucosamine + acetate. The protein operates within glycolipid biosynthesis; lipid IV(A) biosynthesis; lipid IV(A) from (3R)-3-hydroxytetradecanoyl-[acyl-carrier-protein] and UDP-N-acetyl-alpha-D-glucosamine: step 2/6. Functionally, catalyzes the hydrolysis of UDP-3-O-myristoyl-N-acetylglucosamine to form UDP-3-O-myristoylglucosamine and acetate, the committed step in lipid A biosynthesis. The polypeptide is UDP-3-O-acyl-N-acetylglucosamine deacetylase (Pectobacterium atrosepticum (strain SCRI 1043 / ATCC BAA-672) (Erwinia carotovora subsp. atroseptica)).